The primary structure comprises 312 residues: MIEPIMSPYLTFDRQHWAQLRNSVPMTLSESDLKELQGINDHLSMTEAVEIYLPLARLLNLYVAARQSRNGVLHQFLGNTESAPPFVIGIAGSVAVGKSTTARLLKALLSRWENHPKVELITTDGFLYPNKVLTERGIMHKKGFPESYDIRRLVEFVSEVKAGQPNVTAPVYSHLTYDITDEMKVVDRPDVLIIEGLNVLQSGMDYPHDPHRVFISDFLDFSIYVDADSQLIEKWYIERFMKFRQGAFKKPGSYFSHYTALTEAQAEQKARSIWETINGKNLVENILPTKGRAHLILRKGLNHTVEEVLLRK.

ATP is bound at residue 92-99; sequence GSVAVGKS.

It belongs to the prokaryotic pantothenate kinase family.

Its subcellular location is the cytoplasm. The catalysed reaction is (R)-pantothenate + ATP = (R)-4'-phosphopantothenate + ADP + H(+). It participates in cofactor biosynthesis; coenzyme A biosynthesis; CoA from (R)-pantothenate: step 1/5. The protein is Pantothenate kinase (coaA) of Vibrio cholerae serotype O1 (strain ATCC 39315 / El Tor Inaba N16961).